The primary structure comprises 111 residues: uncharacterized protein (111 aa).

This is an uncharacterized protein from Escherichia coli (strain K12).